Here is a 225-residue protein sequence, read N- to C-terminus: Large ribosomal subunit protein uL1 (225 aa).

The protein belongs to the universal ribosomal protein uL1 family. In terms of assembly, part of the 50S ribosomal subunit.

Functionally, binds directly to 23S rRNA. Probably involved in E site tRNA release. Its function is as follows. Protein L1 is also a translational repressor protein, it controls the translation of its operon by binding to its mRNA. The chain is Large ribosomal subunit protein uL1 from Thermofilum pendens (strain DSM 2475 / Hrk 5).